The sequence spans 268 residues: Lectin ESA-2 (268 aa).

A run of 4 repeats spans residues 1–67, 68–135, 136–202, and 203–268. Positions 1-268 are 4 X approximate tandem repeats; that stretch reads GRYTVQNQWG…PIGFKGVATS (268 aa).

Monomer.

Its function is as follows. Lectin specific for high mannose N-glycans, recognizes the branched moiety of these glycans. Does not recognize other types of N-glycans or monosaccharides. Agglutinates trypsin-treated sheep and rabbit erythrocytes and untreated sheep erythrocytes. Has mitogenic activity on mouse lymphocytes. Does not require metal ions for activity. This chain is Lectin ESA-2, found in Eucheuma serra (Marine red alga).